A 79-amino-acid chain; its full sequence is Small ribosomal subunit protein uS17 (79 aa).

Belongs to the universal ribosomal protein uS17 family. As to quaternary structure, part of the 30S ribosomal subunit.

In terms of biological role, one of the primary rRNA binding proteins, it binds specifically to the 5'-end of 16S ribosomal RNA. The sequence is that of Small ribosomal subunit protein uS17 from Rhizobium rhizogenes (strain K84 / ATCC BAA-868) (Agrobacterium radiobacter).